The primary structure comprises 502 residues: Histidine--tRNA ligase (502 aa).

This sequence belongs to the class-II aminoacyl-tRNA synthetase family. In terms of assembly, homodimer.

It localises to the cytoplasm. The enzyme catalyses tRNA(His) + L-histidine + ATP = L-histidyl-tRNA(His) + AMP + diphosphate + H(+). This Brucella suis (strain ATCC 23445 / NCTC 10510) protein is Histidine--tRNA ligase.